A 466-amino-acid chain; its full sequence is Ribulose bisphosphate carboxylase large chain (466 aa).

The residue at position 4 (Lys4) is an N6,N6,N6-trimethyllysine. Residues Asn113 and Thr163 each contribute to the substrate site. Catalysis depends on Lys165, which acts as the Proton acceptor. Lys167 serves as a coordination point for substrate. 3 residues coordinate Mg(2+): Lys191, Asp193, and Glu194. Lys191 is modified (N6-carboxylysine). The active-site Proton acceptor is the His284. The substrate site is built by Arg285, His317, and Ser369.

Belongs to the RuBisCO large chain family. Type I subfamily. Heterohexadecamer of 8 large chains and 8 small chains; disulfide-linked. The disulfide link is formed within the large subunit homodimers. It depends on Mg(2+) as a cofactor. The disulfide bond which can form in the large chain dimeric partners within the hexadecamer appears to be associated with oxidative stress and protein turnover.

It localises to the plastid. The protein resides in the chloroplast. The enzyme catalyses 2 (2R)-3-phosphoglycerate + 2 H(+) = D-ribulose 1,5-bisphosphate + CO2 + H2O. It catalyses the reaction D-ribulose 1,5-bisphosphate + O2 = 2-phosphoglycolate + (2R)-3-phosphoglycerate + 2 H(+). Its function is as follows. RuBisCO catalyzes two reactions: the carboxylation of D-ribulose 1,5-bisphosphate, the primary event in carbon dioxide fixation, as well as the oxidative fragmentation of the pentose substrate in the photorespiration process. Both reactions occur simultaneously and in competition at the same active site. In Drimys winteri (Winter's bark), this protein is Ribulose bisphosphate carboxylase large chain.